We begin with the raw amino-acid sequence, 243 residues long: Carboxy-S-adenosyl-L-methionine synthase (243 aa).

S-adenosyl-L-methionine contacts are provided by residues Y39, G64 to S66, N132, and R199.

This sequence belongs to the class I-like SAM-binding methyltransferase superfamily. Cx-SAM synthase family. Homodimer.

The enzyme catalyses prephenate + S-adenosyl-L-methionine = carboxy-S-adenosyl-L-methionine + 3-phenylpyruvate + H2O. In terms of biological role, catalyzes the conversion of S-adenosyl-L-methionine (SAM) to carboxy-S-adenosyl-L-methionine (Cx-SAM). This is Carboxy-S-adenosyl-L-methionine synthase from Alteromonas mediterranea (strain DSM 17117 / CIP 110805 / LMG 28347 / Deep ecotype).